Consider the following 138-residue polypeptide: Phospholipase A2 homolog 1 (138 aa).

The N-terminal stretch at Met1–Gly16 is a signal peptide. Cystine bridges form between Cys42–Cys132, Cys44–Cys60, Cys59–Cys111, Cys65–Cys138, Cys66–Cys104, Cys73–Cys97, and Cys91–Cys102. The tract at residues Lys121–Lys134 is important for membrane-damaging activities in eukaryotes and bacteria; heparin-binding.

This sequence belongs to the phospholipase A2 family. Group II subfamily. K49 sub-subfamily. As to quaternary structure, homodimer; non-covalently linked (probable alternative/compact dimer conformation in solution). In terms of tissue distribution, expressed by the venom gland.

The protein localises to the secreted. Snake venom phospholipase A2 homolog that lacks enzymatic and anticoagulant activities. In mice, it induces conspicuous local myonecrosis, edema, and a systemic interleukin-6 response. In vitro, it is cytolytic upon myoblasts, and weakly bactericidal. A model of myotoxic mechanism has been proposed: an apo Lys49-PLA2 is activated by the entrance of a hydrophobic molecule (e.g. fatty acid) at the hydrophobic channel of the protein leading to a reorientation of a monomer. This reorientation causes a transition between 'inactive' to 'active' states, causing alignment of C-terminal and membrane-docking sites (MDoS) side-by-side and putting the membrane-disruption sites (MDiS) in the same plane, exposed to solvent and in a symmetric position for both monomers. The MDoS region stabilizes the toxin on membrane by the interaction of charged residues with phospholipid head groups. Subsequently, the MDiS region destabilizes the membrane with penetration of hydrophobic residues. This insertion causes a disorganization of the membrane, allowing an uncontrolled influx of ions (i.e. calcium and sodium), and eventually triggering irreversible intracellular alterations and cell death. The chain is Phospholipase A2 homolog 1 from Bothrops atrox (Barba amarilla).